The following is a 153-amino-acid chain: 6,7-dimethyl-8-ribityllumazine synthase 1 (153 aa).

Residues Phe-16, 50–52, and 74–76 contribute to the 5-amino-6-(D-ribitylamino)uracil site; these read AYE and CVI. Residue 79–80 participates in (2S)-2-hydroxy-3-oxobutyl phosphate binding; sequence ET. The active-site Proton donor is His-82. Phe-107 contributes to the 5-amino-6-(D-ribitylamino)uracil binding site. Residue Arg-121 coordinates (2S)-2-hydroxy-3-oxobutyl phosphate.

Belongs to the DMRL synthase family.

It catalyses the reaction (2S)-2-hydroxy-3-oxobutyl phosphate + 5-amino-6-(D-ribitylamino)uracil = 6,7-dimethyl-8-(1-D-ribityl)lumazine + phosphate + 2 H2O + H(+). It participates in cofactor biosynthesis; riboflavin biosynthesis; riboflavin from 2-hydroxy-3-oxobutyl phosphate and 5-amino-6-(D-ribitylamino)uracil: step 1/2. Catalyzes the formation of 6,7-dimethyl-8-ribityllumazine by condensation of 5-amino-6-(D-ribitylamino)uracil with 3,4-dihydroxy-2-butanone 4-phosphate. This is the penultimate step in the biosynthesis of riboflavin. The polypeptide is 6,7-dimethyl-8-ribityllumazine synthase 1 (Caulobacter vibrioides (strain ATCC 19089 / CIP 103742 / CB 15) (Caulobacter crescentus)).